Reading from the N-terminus, the 809-residue chain is Phenylalanine--tRNA ligase beta subunit (809 aa).

Positions 39–153 constitute a tRNA-binding domain; that stretch reads APPFSQIVVG…EDTPVGADIR (115 aa). Residues 404 to 479 enclose the B5 domain; sequence PKREPVRMRV…RIYGFEQIPA (76 aa). Mg(2+)-binding residues include aspartate 457, aspartate 463, glutamate 466, and glutamate 467. The region spanning 706–808 is the FDX-ACB domain; the sequence is PRVPAVTRDI…AGDAFGARLR (103 aa).

It belongs to the phenylalanyl-tRNA synthetase beta subunit family. Type 1 subfamily. In terms of assembly, tetramer of two alpha and two beta subunits. It depends on Mg(2+) as a cofactor.

It localises to the cytoplasm. It carries out the reaction tRNA(Phe) + L-phenylalanine + ATP = L-phenylalanyl-tRNA(Phe) + AMP + diphosphate + H(+). This is Phenylalanine--tRNA ligase beta subunit from Ralstonia nicotianae (strain ATCC BAA-1114 / GMI1000) (Ralstonia solanacearum).